Here is a 175-residue protein sequence, read N- to C-terminus: SKP1-like protein 20 (175 aa).

An interaction with the F-box domain of F-box proteins region spans residues 117-175 (ILAANYLNIKGLLDLTCQTVADMIKGKTPEEIRKTFNIKNDFTPEEEEEVRRENQWAFE).

Belongs to the SKP1 family. In terms of assembly, part of a SCF (SKP1-CUL1-F-box protein) E3 ubiquitin-protein ligase complex. Interacts with rice black streaked dwarf virus RBSDV protein P7-2. Is able to form the SCF complex together with CUL1 and the viral P7-2 protein. Interacts with D3.

It is found in the nucleus. It functions in the pathway protein modification; protein ubiquitination. Involved in ubiquitination and subsequent proteasomal degradation of target proteins. Together with CUL1, a RING-box and a F-box protein, it forms a SCF E3 ubiquitin ligase complex. The functional specificity of this complex depends on the type of F-box protein. In the SCF complex, it serves as an adapter that links the F-box protein to CUL1. This is SKP1-like protein 20 from Oryza sativa subsp. japonica (Rice).